A 208-amino-acid chain; its full sequence is Protein-L-isoaspartate O-methyltransferase (208 aa).

Ser59 is an active-site residue.

This sequence belongs to the methyltransferase superfamily. L-isoaspartyl/D-aspartyl protein methyltransferase family.

Its subcellular location is the cytoplasm. The catalysed reaction is [protein]-L-isoaspartate + S-adenosyl-L-methionine = [protein]-L-isoaspartate alpha-methyl ester + S-adenosyl-L-homocysteine. Functionally, catalyzes the methyl esterification of L-isoaspartyl residues in peptides and proteins that result from spontaneous decomposition of normal L-aspartyl and L-asparaginyl residues. It plays a role in the repair and/or degradation of damaged proteins. The polypeptide is Protein-L-isoaspartate O-methyltransferase (Aliivibrio salmonicida (strain LFI1238) (Vibrio salmonicida (strain LFI1238))).